The primary structure comprises 119 residues: MARFVVAALLVLLCLSGLEAIQHAPKIQVYSRHPAENGKPNFLNCYVSGFHPSDIEVDLLKNGKKIEKVEHSDLSFSKDWSFYLLYYTEFTPNEKDEYACRVSHVTFPTPKTVKWDRNM.

The first 20 residues, 1 to 20, serve as a signal peptide directing secretion; it reads MARFVVAALLVLLCLSGLEA. The 90-residue stretch at 25 to 114 folds into the Ig-like C1-type domain; the sequence is PKIQVYSRHP…VTFPTPKTVK (90 aa). C45 and C100 are oxidised to a cystine.

The protein belongs to the beta-2-microglobulin family. As to quaternary structure, heterodimer of an alpha chain and a beta chain. Beta-2-microglobulin is the beta-chain of major histocompatibility complex class I molecules.

The protein localises to the secreted. Functionally, component of the class I major histocompatibility complex (MHC). Involved in the presentation of peptide antigens to the immune system. In Cebus albifrons (White-fronted capuchin), this protein is Beta-2-microglobulin (B2M).